Here is a 331-residue protein sequence, read N- to C-terminus: Serine/threonine-protein phosphatase PP1 isozyme 7 (331 aa).

Methionine 1 bears the N-acetylmethionine mark. Positions 60, 62, 88, and 120 each coordinate Mn(2+). The active-site Proton donor is histidine 121. Mn(2+) is bound by residues histidine 169 and histidine 244.

The protein belongs to the PPP phosphatase family. PP-1 subfamily. The cofactor is Mn(2+). In terms of tissue distribution, expressed in roots, rosettes and flowers.

It is found in the nucleus. Its subcellular location is the cytoplasm. The enzyme catalyses O-phospho-L-seryl-[protein] + H2O = L-seryl-[protein] + phosphate. The catalysed reaction is O-phospho-L-threonyl-[protein] + H2O = L-threonyl-[protein] + phosphate. Phosphatase activity is strongly reduced by the protein phosphatase inhibitor 2 (I-2). Serine/threonine-protein phosphatase that possesses phosphatase activity toward para-nitrophenyl phosphate (pNPP) in vitro. In Arabidopsis thaliana (Mouse-ear cress), this protein is Serine/threonine-protein phosphatase PP1 isozyme 7.